Here is a 263-residue protein sequence, read N- to C-terminus: uncharacterized protein (263 aa).

This is an uncharacterized protein from Bacillus subtilis (strain 168).